The sequence spans 175 residues: Regenerating islet-derived protein 3-beta (175 aa).

Residues 1-26 (MLPPTACSVMSWMLLSCLMLLSQVQG) form the signal peptide. The propeptide occupies 27–37 (EDSLKNIPSAR). 3 disulfides stabilise this stretch: C40–C51, C68–C171, and C146–C163. The C-type lectin domain maps to 47 to 172 (YGSYCYALFQ…CEVKLPYVCK (126 aa)). Position 107 (H107) interacts with Zn(2+). An EPN motif is present at residues 114–116 (EPN). E121 is a binding site for Zn(2+).

As to quaternary structure, forms a hexameric membrane-permeabilizing oligomeric pore on membrane phospholipids. The hexamer is formed by three dimers related by helical symmetry. Forms filaments, filamentation traps pore complexes and limits damage to host cells. Interacts with EXTL3. Proteolytic processing by trypsin removes an inhibitory N-terminal propeptide and is essential for peptidoglycan binding and antibacterial activity. Constitutively expressed in the small intestine, moderately in colon and at an extremely low level in healthy pancreas.

Its subcellular location is the secreted. Lipopolysaccharide inhibits pore-forming activity, explaining why is bactericidal for Gram-positive but not Gram-negative bacteria. In terms of biological role, bactericidal C-type lectin which acts against several intestinal Gram-positive and Gram-negative bacteria. Lacks antibacterial activity against S.typhimurium. May play a role in protection against infection with S.enteritidis by inhibiting its translocation from the gut lumen into intestinal tissues and further extraintestinal tissues. Acts as a hormone in response to different stimuli. Secreted by different cell types to activate its receptor EXTL3 and induce cell specific signaling pathways. In pancreas, is able stimulate cell proliferation. This Mus musculus (Mouse) protein is Regenerating islet-derived protein 3-beta.